Reading from the N-terminus, the 136-residue chain is Large ribosomal subunit protein uL16 (136 aa).

Belongs to the universal ribosomal protein uL16 family. In terms of assembly, part of the 50S ribosomal subunit.

Its function is as follows. Binds 23S rRNA and is also seen to make contacts with the A and possibly P site tRNAs. The polypeptide is Large ribosomal subunit protein uL16 (Rickettsia felis (strain ATCC VR-1525 / URRWXCal2) (Rickettsia azadi)).